The sequence spans 244 residues: Phosphoadenosine 5'-phosphosulfate reductase (244 aa).

Cysteine 239 functions as the Nucleophile; cysteine thiosulfonate intermediate in the catalytic mechanism.

This sequence belongs to the PAPS reductase family. CysH subfamily.

Its subcellular location is the cytoplasm. It carries out the reaction [thioredoxin]-disulfide + sulfite + adenosine 3',5'-bisphosphate + 2 H(+) = [thioredoxin]-dithiol + 3'-phosphoadenylyl sulfate. The protein operates within sulfur metabolism; hydrogen sulfide biosynthesis; sulfite from sulfate: step 3/3. Functionally, catalyzes the formation of sulfite from phosphoadenosine 5'-phosphosulfate (PAPS) using thioredoxin as an electron donor. The protein is Phosphoadenosine 5'-phosphosulfate reductase of Klebsiella pneumoniae subsp. pneumoniae (strain ATCC 700721 / MGH 78578).